A 530-amino-acid polypeptide reads, in one-letter code: Cytochrome P450 monooxygenase aneG (530 aa).

N2 carries an N-linked (GlcNAc...) asparagine glycan. Residues 43 to 63 (WLSILGFTIGCYYVIYTFYAL) traverse the membrane as a helical segment. The N-linked (GlcNAc...) asparagine glycan is linked to N92. A heme-binding site is contributed by C474.

This sequence belongs to the cytochrome P450 family. Requires heme as cofactor.

It localises to the membrane. The catalysed reaction is asperaculane E + reduced [NADPH--hemoprotein reductase] + O2 = asperaculane G + oxidized [NADPH--hemoprotein reductase] + H2O + H(+). It catalyses the reaction asperaculane G + reduced [NADPH--hemoprotein reductase] + O2 = aculene D + oxidized [NADPH--hemoprotein reductase] + CO2 + 2 H2O. The enzyme catalyses asperaculane E + 2 reduced [NADPH--hemoprotein reductase] + 2 O2 = aculene D + 2 oxidized [NADPH--hemoprotein reductase] + CO2 + 3 H2O + H(+). Its pathway is secondary metabolite biosynthesis. Cytochrome P450 monooxygenase; part of the gene cluster that mediates the biosynthesis of aculenes, a unique type of norsesquiterpenes that contain a nordaucane skeleton linked to an L-proline moiety and are of mixed biosynthetic origin. The pathway begins with the synthesis of dauca-4,7-diene by the terpene cyclase aneC using farnesyl pyrophosphate (FPP) as substrate. The cytochrome P450 monooxygenase aneF then performs the initial oxidation at C-12 of dauca-4,7-diene to yield asperaculane D. Asperaculane D is substrate of the cytochrome P450 monooxygenase aneD for C-10 hydroxylation to yield asperaculane E. The cytochrome P450 monooxygenase aneG then converts asperaculane E into aculene D via C-2 oxidation. The monomodular nonribosomal peptide synthtase aneB adenylates L-proline and the thiohydrolase aneE transfers this activated L-proline derivative to aculenes D and C to produce respectively aculenes B and A. The dioxygenase aneA converts aculene D into aculene C, and aculene B into aculene A by introducing the 5,6-alkene moiety. Asperculanes A, B, C and F, as well as 14-prolyl asperculane C, might be shunt products of the pathway. The polypeptide is Cytochrome P450 monooxygenase aneG (Aspergillus aculeatus (strain ATCC 16872 / CBS 172.66 / WB 5094)).